Consider the following 360-residue polypeptide: Fructose-bisphosphate aldolase 1 (360 aa).

A D-glyceraldehyde 3-phosphate-binding site is contributed by serine 63. The Proton donor role is filled by aspartate 110. Zn(2+) is bound by residues histidine 111, aspartate 145, glutamate 175, and histidine 227. Dihydroxyacetone phosphate is bound at residue glycine 228. Residue histidine 266 participates in Zn(2+) binding. Residue 267–269 coordinates dihydroxyacetone phosphate; it reads GGS.

It belongs to the class II fructose-bisphosphate aldolase family. In terms of assembly, homodimer. It depends on Zn(2+) as a cofactor.

It catalyses the reaction beta-D-fructose 1,6-bisphosphate = D-glyceraldehyde 3-phosphate + dihydroxyacetone phosphate. Its pathway is carbohydrate degradation; glycolysis; D-glyceraldehyde 3-phosphate and glycerone phosphate from D-glucose: step 4/4. Its function is as follows. Catalyzes the aldol condensation of dihydroxyacetone phosphate (DHAP or glycerone-phosphate) with glyceraldehyde 3-phosphate (G3P) to form fructose 1,6-bisphosphate (FBP) in gluconeogenesis and the reverse reaction in glycolysis. This is Fructose-bisphosphate aldolase 1 (FBA1) from Paracoccidioides lutzii (strain ATCC MYA-826 / Pb01) (Paracoccidioides brasiliensis).